The sequence spans 444 residues: UDP-N-acetylmuramate--L-alanine ligase (444 aa).

110–116 (GAHGKTS) is an ATP binding site.

The protein belongs to the MurCDEF family. In terms of processing, phosphorylated by StkP in vitro. Dephosphorylated by PhpP in vitro.

It is found in the cytoplasm. It catalyses the reaction UDP-N-acetyl-alpha-D-muramate + L-alanine + ATP = UDP-N-acetyl-alpha-D-muramoyl-L-alanine + ADP + phosphate + H(+). The protein operates within cell wall biogenesis; peptidoglycan biosynthesis. Functionally, cell wall formation. This chain is UDP-N-acetylmuramate--L-alanine ligase, found in Streptococcus pneumoniae serotype 4 (strain ATCC BAA-334 / TIGR4).